Consider the following 277-residue polypeptide: MATFFGEVLSVYSRAVEEDEYEDMTNENEEDEQIRREIEEKRSVEVCWLLGSQDGPLQCSDLIIGAGPNASGFIRAYLLSTVGWTAVAWLSFWNERSRGSERPTVVPGPGEPSCVLYRLESCPTVLICQCQGFVAEDQLFQFTEKVFSCVQTRDLNVTILSDCSSADYKTSDYLSGSSTPFLRCLKTSTYTHTVTCPPLEQPNICSGLAAAVLSHCQVHQISAVLYQCYSDVLHPDSASMQMFAATLSSVLKLEQSLSADVLQRVTRVSEIQSNLYT.

Belongs to the PSMG1 family. Forms a heterodimer with psmg2. Degraded by the proteasome upon completion of 20S proteasome maturation.

The protein resides in the cytoplasm. The protein localises to the endoplasmic reticulum. Functionally, chaperone protein which promotes assembly of the 20S proteasome as part of a heterodimer with psmg2. In Danio rerio (Zebrafish), this protein is Proteasome assembly chaperone 1.